A 510-amino-acid chain; its full sequence is Lysine--tRNA ligase (510 aa).

Residues Glu-420 and Glu-427 each coordinate Mg(2+).

The protein belongs to the class-II aminoacyl-tRNA synthetase family. In terms of assembly, homodimer. Requires Mg(2+) as cofactor.

It localises to the cytoplasm. It catalyses the reaction tRNA(Lys) + L-lysine + ATP = L-lysyl-tRNA(Lys) + AMP + diphosphate. The sequence is that of Lysine--tRNA ligase from Vibrio vulnificus (strain YJ016).